The sequence spans 1651 residues: Roundabout homolog 1 (1651 aa).

The N-terminal stretch at 1–25 (MKWKHVPFLVMISLLSLSPNHLFLA) is a signal peptide. Topologically, residues 26-897 (QLIPDPEDVE…QQISDVVKQP (872 aa)) are extracellular. The tract at residues 33–57 (DVERGNDHGTPIPTSDNDDNSLGYT) is disordered. Polar residues predominate over residues 44-56 (IPTSDNDDNSLGY). Ig-like C2-type domains follow at residues 68–164 (PRIV…ASLE), 170–257 (DDFR…AELT), 262–346 (PSFV…ATLT), 351–446 (PHFV…LEVT), and 455–541 (PVIR…AYIE). A disulfide bond links Cys-89 and Cys-147. Asn-160 carries N-linked (GlcNAc...) asparagine glycosylation. Cystine bridges form between Cys-191-Cys-240, Cys-283-Cys-330, and Cys-372-Cys-428. Asn-463 is a glycosylation site (N-linked (GlcNAc...) asparagine). A disulfide bridge links Cys-476 with Cys-525. Fibronectin type-III domains are found at residues 563-657 (APSK…TQDV), 676-773 (AVLH…TLEE), and 778-874 (PPQG…LDAH). N-linked (GlcNAc...) asparagine glycosylation is found at Asn-790, Asn-820, and Asn-827. A helical transmembrane segment spans residues 898 to 918 (AFIAGIGAACWIILMVFSIWL). At 919 to 1651 (YRHRKKRNGL…NNEELEETES (733 aa)) the chain is on the cytoplasmic side. Residue Ser-940 is modified to Phosphoserine. Phosphothreonine is present on Thr-948. Residue Tyr-1038 is modified to Phosphotyrosine; by ABL; in vitro. Ser-1055 carries the post-translational modification Phosphoserine. 2 positions are modified to phosphotyrosine; by ABL; in vitro: Tyr-1073 and Tyr-1114. Disordered regions lie at residues 1124-1202 (KDYR…SEEY), 1224-1337 (YLQQ…ADME), 1352-1397 (EQTP…DGSF), and 1420-1651 (RRQM…ETES). The span at 1137–1146 (PYNQSYDQNT) shows a compositional bias: polar residues. Residues 1147-1163 (GGSYNSSDRGSSTSGSQ) are compositionally biased toward low complexity. The span at 1186-1196 (LPPPPAHPPPH) shows a compositional bias: pro residues. The residue at position 1240 (Thr-1240) is a Phosphothreonine. Polar residues predominate over residues 1255-1269 (YSHQSTATLTPSPQE). Residues 1281–1293 (ETGHMQHQPDRRR) show a composition bias toward basic and acidic residues. A compositionally biased stretch (pro residues) spans 1296 to 1307 (VSPPPPPRPISP). Ser-1297 carries the phosphoserine modification. Positions 1322–1336 (MDTDAPEEEEDEADM) are enriched in acidic residues. Residues 1384–1397 (SSGRSSVSSSDGSF) are compositionally biased toward low complexity. Residues 1438–1451 (PRPTSPVSTDSNMS) are compositionally biased toward polar residues. Residues 1459–1470 (RPAKKLKHQPGH) show a composition bias toward basic residues. Residues 1480-1490 (LPPPPVPPPAI) show a composition bias toward pro residues. Basic and acidic residues-rich tracts occupy residues 1516 to 1541 (ARTDRSSDRKGSSYKGREVLDGRQVV) and 1549 to 1573 (DPREAQEQQNDGKGRGNKAAKRDLP). A compositionally biased stretch (polar residues) spans 1592–1601 (FPTSNNPRDP). Residues 1602 to 1614 (SSSSSMSSRGSGS) are compositionally biased toward low complexity. Residues 1642-1651 (NNEELEETES) show a composition bias toward acidic residues.

Belongs to the immunoglobulin superfamily. ROBO family. In terms of assembly, homodimer. Dimerization is mediated by the extracellular domain and is independent of SLIT liganding. Interacts with SLIT1. Interacts with SLIT2. Interacts with FLRT3. Interacts with MYO9B (via Rho-GAP domain). In terms of processing, ubiquitinated. May be deubiquitinated by USP33. Widely expressed, with exception of kidney.

The protein resides in the cell membrane. It localises to the cell projection. The protein localises to the axon. Its subcellular location is the endoplasmic reticulum-Golgi intermediate compartment membrane. Receptor for SLIT1 and SLIT2 that mediates cellular responses to molecular guidance cues in cellular migration, including axonal navigation at the ventral midline of the neural tube and projection of axons to different regions during neuronal development. Interaction with the intracellular domain of FLRT3 mediates axon attraction towards cells expressing NTN1. In axon growth cones, the silencing of the attractive effect of NTN1 by SLIT2 may require the formation of a ROBO1-DCC complex. Plays a role in the regulation of cell migration via its interaction with MYO9B; inhibits MYO9B-mediated stimulation of RHOA GTPase activity, and thereby leads to increased levels of active, GTP-bound RHOA. May be required for lung development. This chain is Roundabout homolog 1 (ROBO1), found in Homo sapiens (Human).